The sequence spans 180 residues: Large ribosomal subunit protein uL10 (180 aa).

Belongs to the universal ribosomal protein uL10 family. In terms of assembly, part of the ribosomal stalk of the 50S ribosomal subunit. The N-terminus interacts with L11 and the large rRNA to form the base of the stalk. The C-terminus forms an elongated spine to which L12 dimers bind in a sequential fashion forming a multimeric L10(L12)X complex.

Its function is as follows. Forms part of the ribosomal stalk, playing a central role in the interaction of the ribosome with GTP-bound translation factors. This chain is Large ribosomal subunit protein uL10, found in Thermosipho africanus (strain TCF52B).